The primary structure comprises 236 residues: Aspartate/glutamate leucyltransferase (236 aa).

This sequence belongs to the R-transferase family. Bpt subfamily.

The protein resides in the cytoplasm. It carries out the reaction N-terminal L-glutamyl-[protein] + L-leucyl-tRNA(Leu) = N-terminal L-leucyl-L-glutamyl-[protein] + tRNA(Leu) + H(+). It catalyses the reaction N-terminal L-aspartyl-[protein] + L-leucyl-tRNA(Leu) = N-terminal L-leucyl-L-aspartyl-[protein] + tRNA(Leu) + H(+). Functionally, functions in the N-end rule pathway of protein degradation where it conjugates Leu from its aminoacyl-tRNA to the N-termini of proteins containing an N-terminal aspartate or glutamate. The polypeptide is Aspartate/glutamate leucyltransferase (Halorhodospira halophila (strain DSM 244 / SL1) (Ectothiorhodospira halophila (strain DSM 244 / SL1))).